Reading from the N-terminus, the 297-residue chain is ATP synthase gamma chain (297 aa).

It belongs to the ATPase gamma chain family. In terms of assembly, F-type ATPases have 2 components, CF(1) - the catalytic core - and CF(0) - the membrane proton channel. CF(1) has five subunits: alpha(3), beta(3), gamma(1), delta(1), epsilon(1). CF(0) has three main subunits: a, b and c.

It localises to the cell membrane. Produces ATP from ADP in the presence of a proton gradient across the membrane. The gamma chain is believed to be important in regulating ATPase activity and the flow of protons through the CF(0) complex. In Renibacterium salmoninarum (strain ATCC 33209 / DSM 20767 / JCM 11484 / NBRC 15589 / NCIMB 2235), this protein is ATP synthase gamma chain.